Here is a 196-residue protein sequence, read N- to C-terminus: Peptide deformylase (196 aa).

Residues Cys97 and His139 each coordinate Fe cation. The active site involves Glu140. Residue His143 coordinates Fe cation. The span at 171 to 187 shows a compositional bias: basic and acidic residues; the sequence is LDAQEPKRAPHSPHTDA. The interval 171 to 196 is disordered; sequence LDAQEPKRAPHSPHTDAQKPGAASDL.

It belongs to the polypeptide deformylase family. Fe(2+) serves as cofactor.

The catalysed reaction is N-terminal N-formyl-L-methionyl-[peptide] + H2O = N-terminal L-methionyl-[peptide] + formate. Removes the formyl group from the N-terminal Met of newly synthesized proteins. Requires at least a dipeptide for an efficient rate of reaction. N-terminal L-methionine is a prerequisite for activity but the enzyme has broad specificity at other positions. The sequence is that of Peptide deformylase from Methylocella silvestris (strain DSM 15510 / CIP 108128 / LMG 27833 / NCIMB 13906 / BL2).